A 250-amino-acid polypeptide reads, in one-letter code: 2,5-dichloro-2,5-cyclohexadiene-1,4-diol dehydrogenase (250 aa).

Residue 9–34 (IIVTGGGSGIGRATVELLVASGANVA) participates in NAD(+) binding. Ser-141 lines the substrate pocket. Catalysis depends on Tyr-154, which acts as the Proton acceptor.

This sequence belongs to the short-chain dehydrogenases/reductases (SDR) family.

The catalysed reaction is 2,5-dichlorocyclohexa-2,5-dien-1,4-diol + NAD(+) = 2,5-dichlorohydroquinone + NADH + H(+). The protein operates within xenobiotic degradation; gamma-hexachlorocyclohexane degradation. Its function is as follows. Catalyzes the dehydrogenation of 2,5-dichloro-2,5-cyclohexadiene-1,4-diol (2,5-DDOL) to 2,5-dichlorohydroquinone (2,5-DCHQ), a step in the degradation of gamma-hexachlorocyclohexane (gamma-HCH or lindane). The polypeptide is 2,5-dichloro-2,5-cyclohexadiene-1,4-diol dehydrogenase (Sphingobium indicum (strain DSM 16412 / CCM 7286 / MTCC 6364 / B90A)).